A 201-amino-acid polypeptide reads, in one-letter code: Probable GTP-binding protein EngB (201 aa).

In terms of domain architecture, EngB-type G spans 22–197 (TFPEYAFIGR…LNYIESINKE (176 aa)). Residues 30-37 (GRSNVGKS), 57-61 (GKTML), 75-78 (DLPG), 142-145 (TKAD), and 175-178 (ITSS) contribute to the GTP site. Mg(2+) contacts are provided by Ser-37 and Thr-59.

The protein belongs to the TRAFAC class TrmE-Era-EngA-EngB-Septin-like GTPase superfamily. EngB GTPase family. It depends on Mg(2+) as a cofactor.

Functionally, necessary for normal cell division and for the maintenance of normal septation. The sequence is that of Probable GTP-binding protein EngB from Bacteroides fragilis (strain YCH46).